A 666-amino-acid polypeptide reads, in one-letter code: ATP synthase subunit alpha 2 (666 aa).

182-189 (GDRATGKT) is a binding site for ATP. Residues 527-666 (MPAEDAAGDI…DAEAEARHKR (140 aa)) are disordered. The span at 545-590 (ARGDADRDADHGANREVSREVSPEASREVSREVSCEVSHEADRDAA) shows a compositional bias: basic and acidic residues. Residues 591-601 (ADAARVAGRAP) show a composition bias toward low complexity. Over residues 623–641 (ADGDRASASRPRPDARGDA) the composition is skewed to basic and acidic residues.

The protein belongs to the ATPase alpha/beta chains family. In terms of assembly, F-type ATPases have 2 components, CF(1) - the catalytic core - and CF(0) - the membrane proton channel. CF(1) has five subunits: alpha(3), beta(3), gamma(1), delta(1), epsilon(1). CF(0) has three main subunits: a(1), b(2) and c(9-12). The alpha and beta chains form an alternating ring which encloses part of the gamma chain. CF(1) is attached to CF(0) by a central stalk formed by the gamma and epsilon chains, while a peripheral stalk is formed by the delta and b chains.

The protein resides in the cell inner membrane. The catalysed reaction is ATP + H2O + 4 H(+)(in) = ADP + phosphate + 5 H(+)(out). Its function is as follows. Produces ATP from ADP in the presence of a proton gradient across the membrane. The alpha chain is a regulatory subunit. The polypeptide is ATP synthase subunit alpha 2 (Burkholderia pseudomallei (strain 1106a)).